Consider the following 712-residue polypeptide: Eukaryotic peptide chain release factor GTP-binding subunit (712 aa).

Residues 1 to 23 (MSNPQDQLSNDLANASISGDQSK) show a composition bias toward polar residues. Disordered stretches follow at residues 1-64 (MSNP…QYGG), 76-115 (GYQQ…QQQY), 132-162 (PQQQ…ASLN), and 184-256 (TKKV…APVS). Residues 16–143 (SISGDQSKQP…QQQQQQTQSQ (128 aa)) are several sort of repeats. Low complexity-rich tracts occupy residues 24–35 (QPQQQQPQQQQP) and 48–64 (TGGY…QYGG). 2 stretches are compositionally biased toward low complexity: residues 132–141 (PQQQQQQQTQ) and 190–201 (AKPAASKEASPA). Residues 144–282 (GMSLADFQKQ…DEVDEEVVKD (139 aa)) form a charged region. Positions 202 to 217 (PKDEEASAEPEAKKES) are enriched in basic and acidic residues. Positions 218-256 (TPVPASSSPAPAAADSTPAPVKKESTPTPSVASKSAPVS) are enriched in low complexity. One can recognise a tr-type G domain in the interval 287 to 512 (KDHVSIIFMG…YLDNMDTMNR (226 aa)). Positions 296–303 (GHVDAGKS) are G1. 296 to 303 (GHVDAGKS) contributes to the GTP binding site. Residues 352 to 356 (GKTIE) are G2. A Phosphothreonine modification is found at threonine 370. The interval 373 to 376 (DAPG) is G3. GTP is bound by residues 373-377 (DAPGH) and 435-438 (NKMD). The G4 stretch occupies residues 435–438 (NKMD). Residues 476 to 478 (SGY) form a G5 region.

The protein belongs to the TRAFAC class translation factor GTPase superfamily. Classic translation factor GTPase family. ERF3 subfamily.

Its subcellular location is the cytoplasm. Its function is as follows. Involved in translation termination. Stimulates the activity of ERF1. Binds guanine nucleotides. The sequence is that of Eukaryotic peptide chain release factor GTP-binding subunit (SUP35) from Candida maltosa (Yeast).